Consider the following 245-residue polypeptide: Adapter protein MecA (245 aa).

It belongs to the MecA family. As to quaternary structure, homodimer.

Its function is as follows. Enables the recognition and targeting of unfolded and aggregated proteins to the ClpC protease or to other proteins involved in proteolysis. The polypeptide is Adapter protein MecA (Streptococcus pneumoniae (strain Hungary19A-6)).